A 623-amino-acid polypeptide reads, in one-letter code: Isocitrate dehydrogenase kinase/phosphatase (623 aa).

ATP contacts are provided by residues 344–350 and Lys-365; that span reads APGIKGM. The active site involves Asp-400.

The protein belongs to the AceK family.

It localises to the cytoplasm. The enzyme catalyses L-seryl-[isocitrate dehydrogenase] + ATP = O-phospho-L-seryl-[isocitrate dehydrogenase] + ADP + H(+). In terms of biological role, bifunctional enzyme which can phosphorylate or dephosphorylate isocitrate dehydrogenase (IDH) on a specific serine residue. This is a regulatory mechanism which enables bacteria to bypass the Krebs cycle via the glyoxylate shunt in response to the source of carbon. When bacteria are grown on glucose, IDH is fully active and unphosphorylated, but when grown on acetate or ethanol, the activity of IDH declines drastically concomitant with its phosphorylation. In Polaromonas naphthalenivorans (strain CJ2), this protein is Isocitrate dehydrogenase kinase/phosphatase.